We begin with the raw amino-acid sequence, 212 residues long: 3-demethoxyubiquinol 3-hydroxylase (212 aa).

Residues 1-14 (MTSPSSRTPRGSTP) are compositionally biased toward low complexity. The disordered stretch occupies residues 1–22 (MTSPSSRTPRGSTPPFEPSADE). 6 residues coordinate Fe cation: glutamate 58, glutamate 89, histidine 92, glutamate 141, glutamate 173, and histidine 176.

The protein belongs to the COQ7 family. The cofactor is Fe cation.

It is found in the cell membrane. It carries out the reaction a 5-methoxy-2-methyl-3-(all-trans-polyprenyl)benzene-1,4-diol + AH2 + O2 = a 3-demethylubiquinol + A + H2O. Its pathway is cofactor biosynthesis; ubiquinone biosynthesis. Its function is as follows. Catalyzes the hydroxylation of 2-nonaprenyl-3-methyl-6-methoxy-1,4-benzoquinol during ubiquinone biosynthesis. The chain is 3-demethoxyubiquinol 3-hydroxylase from Rhodospirillum rubrum (strain ATCC 11170 / ATH 1.1.1 / DSM 467 / LMG 4362 / NCIMB 8255 / S1).